A 223-amino-acid chain; its full sequence is Phosphoribosylformylglycinamidine synthase subunit PurQ (223 aa).

The region spanning 2–223 (KVAIIRFPGT…LLENFINFNF (222 aa)) is the Glutamine amidotransferase type-1 domain. Residue cysteine 84 is the Nucleophile of the active site. Residues histidine 192 and glutamate 194 contribute to the active site.

Part of the FGAM synthase complex composed of 1 PurL, 1 PurQ and 2 PurS subunits.

It is found in the cytoplasm. The catalysed reaction is N(2)-formyl-N(1)-(5-phospho-beta-D-ribosyl)glycinamide + L-glutamine + ATP + H2O = 2-formamido-N(1)-(5-O-phospho-beta-D-ribosyl)acetamidine + L-glutamate + ADP + phosphate + H(+). It carries out the reaction L-glutamine + H2O = L-glutamate + NH4(+). The protein operates within purine metabolism; IMP biosynthesis via de novo pathway; 5-amino-1-(5-phospho-D-ribosyl)imidazole from N(2)-formyl-N(1)-(5-phospho-D-ribosyl)glycinamide: step 1/2. Functionally, part of the phosphoribosylformylglycinamidine synthase complex involved in the purines biosynthetic pathway. Catalyzes the ATP-dependent conversion of formylglycinamide ribonucleotide (FGAR) and glutamine to yield formylglycinamidine ribonucleotide (FGAM) and glutamate. The FGAM synthase complex is composed of three subunits. PurQ produces an ammonia molecule by converting glutamine to glutamate. PurL transfers the ammonia molecule to FGAR to form FGAM in an ATP-dependent manner. PurS interacts with PurQ and PurL and is thought to assist in the transfer of the ammonia molecule from PurQ to PurL. This chain is Phosphoribosylformylglycinamidine synthase subunit PurQ, found in Campylobacter jejuni subsp. jejuni serotype O:2 (strain ATCC 700819 / NCTC 11168).